We begin with the raw amino-acid sequence, 251 residues long: MSDYVYELMKQHHSVRKFKNQPLGSETVEKLVEAGQSASTSSYLQTYSIIGVEDPSIKARLKEVSGQPYVLDNGYLFVFVLDYYRHHLVDEVAASNMETSYGSAEGLLVGTIDVALVAQNMAVAAEDMGYGIVYLGSLRNDVARVREILNLPDYTFPLFGMAVGEPSDEENGSPKPRLPFKHIFHKDQYDANQHQQRKELEAYDQVVSEYYKERTHGVRTENWSQQIETFLGRKTRLDMLDELKKAGFIQR.

This sequence belongs to the flavin oxidoreductase frp family. FMN serves as cofactor.

Reduces FMN, organic nitro compounds and disulfide DTNB. Involved in maintenance of the cellular redox state and the disulfide stress response. This is NADPH-dependent oxidoreductase (nfrA) from Staphylococcus epidermidis (strain ATCC 35984 / DSM 28319 / BCRC 17069 / CCUG 31568 / BM 3577 / RP62A).